The sequence spans 486 residues: Membrane-bound lytic murein transglycosylase F (486 aa).

The N-terminal stretch at 1 to 28 is a signal peptide; the sequence is MFAHTLFRKRCAIWLLAIGIFLMLGSCA. The interval 29–267 is non-LT domain; it reads EKPSELERIK…RLRERYYGHV (239 aa). An LT domain region spans residues 268 to 486; it reads DVLGYVGAYA…TDLMEELPPL (219 aa). Residue Glu314 is part of the active site.

This sequence in the N-terminal section; belongs to the bacterial solute-binding protein 3 family. It in the C-terminal section; belongs to the transglycosylase Slt family.

Its subcellular location is the cell outer membrane. It catalyses the reaction Exolytic cleavage of the (1-&gt;4)-beta-glycosidic linkage between N-acetylmuramic acid (MurNAc) and N-acetylglucosamine (GlcNAc) residues in peptidoglycan, from either the reducing or the non-reducing ends of the peptidoglycan chains, with concomitant formation of a 1,6-anhydrobond in the MurNAc residue.. Murein-degrading enzyme that degrades murein glycan strands and insoluble, high-molecular weight murein sacculi, with the concomitant formation of a 1,6-anhydromuramoyl product. Lytic transglycosylases (LTs) play an integral role in the metabolism of the peptidoglycan (PG) sacculus. Their lytic action creates space within the PG sacculus to allow for its expansion as well as for the insertion of various structures such as secretion systems and flagella. This chain is Membrane-bound lytic murein transglycosylase F, found in Stutzerimonas stutzeri (strain A1501) (Pseudomonas stutzeri).